Here is a 323-residue protein sequence, read N- to C-terminus: Staphylococcal-like nuclease CAN1 (323 aa).

The N-myristoyl glycine moiety is linked to residue Gly-2. Cys-11 carries S-palmitoyl cysteine lipidation. Residues 130-306 (NTLPVDTKSV…RQKRVGLWAS (177 aa)) form the TNase-like domain. Asp-143 serves as a coordination point for Ca(2+). The active site involves Arg-213. Ca(2+) is bound at residue Asp-218. Active-site residues include Glu-221 and Arg-255.

This sequence belongs to the thermonuclease family. Requires Ca(2+) as cofactor.

It is found in the cell membrane. With respect to regulation, inhibited by Zn(2+). In terms of biological role, enzyme that catalyzes the hydrolysis of both DNA and RNA at the 5' position of the phosphodiester bond. Possesses activity toward the single-stranded DNA, double-stranded DNA and RNA. May be involved in genomic DNA degradation during programmed cell death. This is Staphylococcal-like nuclease CAN1 (CAN1) from Arabidopsis thaliana (Mouse-ear cress).